A 177-amino-acid chain; its full sequence is MSRVAKNPVTVPAGVEVKFGTEALVIKGKNGELSFPLHSDVAIEFNDGKLAFVANNSSKQANAMSGTARALVSNMVKGVSEGFEKRLQLIGVGYRAQAQGKILNLSLGFSHPIVYEMPEGVSVQTPSQTEIVLTGSDKQVVGQVAAEIRAFRAPEPYKGKGVRYVGEVVVMKEAKKK.

It belongs to the universal ribosomal protein uL6 family. Part of the 50S ribosomal subunit.

This protein binds to the 23S rRNA, and is important in its secondary structure. It is located near the subunit interface in the base of the L7/L12 stalk, and near the tRNA binding site of the peptidyltransferase center. The protein is Large ribosomal subunit protein uL6 of Neisseria meningitidis serogroup C (strain 053442).